Reading from the N-terminus, the 705-residue chain is Protein arginine N-methyltransferase 7 (705 aa).

SAM-dependent MTase PRMT-type domains lie at 29–372 (QNSW…YSLW) and 381–705 (TKSV…QKKL).

This sequence belongs to the class I-like SAM-binding methyltransferase superfamily. Protein arginine N-methyltransferase family. PRMT7 subfamily.

In terms of biological role, essential arginine methyltransferase that can both catalyze the formation of omega-N monomethylarginine (MMA) and symmetrical dimethylarginine (sDMA). Specifically mediates the symmetrical dimethylation of arginine residues in the small nuclear ribonucleoproteins SmD1 and SmD3. The polypeptide is Protein arginine N-methyltransferase 7 (Art7) (Drosophila simulans (Fruit fly)).